A 444-amino-acid chain; its full sequence is Na(+)/H(+) antiporter NhaA (444 aa).

Helical transmembrane passes span 27–47, 72–92, 108–128, 136–156, 167–187, 190–210, 212–232, 312–332, 349–369, 385–405, and 419–439; these read TTGLMLMLMTVVALLLANSPL, IHHWINDGLMAIFFFIIGLEI, MLPILAAIGGMALPALIYYAI, AGWGIPMATDIAFAISALVLL, FLVALAIVDDLGAVVVIALFY, EINMLPLLFAFISFLVLVSFN, FGIHAILPYFVVGFIMWLFML, HLPVSLVVIPLFALANAGVSI, VMAGLVFGKVFGIAGISYLAI, VFGVAFLGGIGFTMSIFIAEL, and IGILAASLFAGIFGFIWLRFI.

Belongs to the NhaA Na(+)/H(+) (TC 2.A.33) antiporter family.

The protein localises to the cell inner membrane. The catalysed reaction is Na(+)(in) + 2 H(+)(out) = Na(+)(out) + 2 H(+)(in). Functionally, na(+)/H(+) antiporter that extrudes sodium in exchange for external protons. In Sulfurimonas denitrificans (strain ATCC 33889 / DSM 1251) (Thiomicrospira denitrificans (strain ATCC 33889 / DSM 1251)), this protein is Na(+)/H(+) antiporter NhaA.